Consider the following 385-residue polypeptide: Actin-2 (385 aa).

The protein belongs to the actin family. ARP1 subfamily.

Its subcellular location is the cytoplasm. It is found in the cytoskeleton. The protein is Actin-2 of Pneumocystis carinii.